The sequence spans 545 residues: Probable bifunctional tRNA threonylcarbamoyladenosine biosynthesis protein (545 aa).

Residues M1 to W329 are kae1. Positions 113, 117, and 134 each coordinate Fe cation. L-threonylcarbamoyladenylate-binding positions include Y134–A138, D166, G179, E183, and N262. D290 contacts Fe cation. Residues E340–A545 form the Protein kinase domain. ATP contacts are provided by residues L353 to V361 and K375. D462 (proton acceptor; for kinase activity) is an active-site residue.

In the N-terminal section; belongs to the KAE1 / TsaD family. It in the C-terminal section; belongs to the protein kinase superfamily. Tyr protein kinase family. BUD32 subfamily. Component of the KEOPS complex that consists of Kae1, Bud32, Cgi121 and Pcc1; the whole complex dimerizes. Requires Fe(2+) as cofactor.

The protein localises to the cytoplasm. The catalysed reaction is L-seryl-[protein] + ATP = O-phospho-L-seryl-[protein] + ADP + H(+). It catalyses the reaction L-threonyl-[protein] + ATP = O-phospho-L-threonyl-[protein] + ADP + H(+). It carries out the reaction L-threonylcarbamoyladenylate + adenosine(37) in tRNA = N(6)-L-threonylcarbamoyladenosine(37) in tRNA + AMP + H(+). Its function is as follows. Required for the formation of a threonylcarbamoyl group on adenosine at position 37 (t(6)A37) in tRNAs that read codons beginning with adenine. Is a component of the KEOPS complex that is probably involved in the transfer of the threonylcarbamoyl moiety of threonylcarbamoyl-AMP (TC-AMP) to the N6 group of A37. The Kae1 domain likely plays a direct catalytic role in this reaction. The Bud32 domain probably displays kinase activity that regulates Kae1 function. In Methanosarcina barkeri (strain Fusaro / DSM 804), this protein is Probable bifunctional tRNA threonylcarbamoyladenosine biosynthesis protein.